Here is a 302-residue protein sequence, read N- to C-terminus: MPINIPKDLPAKEILEQENIFVMDEERAYSQDIRPLNIIILNLMPEKEKAETQLLRLLGNSPLQVNVTFLRPATHEPKTTSKHHLEQFYTIFPHIRHRKFDGMIITGAPVEQMPFEEVNYWGELTEIMEWTKTNVTSTLHICWGAQAGLYYHYGIPKYPLPEKCFGVFNHTVEVKNVKLLRGFDDVFRMPHSRHTDVKREDIEKVPDLTILSMSDKAGVCLVASNDGRRIFLTGHPEYDATTLKEEYERDLAKGLPIHIPESYFPNDDPSQPPLNTWRSHANLLFVNWLNYYVYQETPYEWE.

The Acyl-thioester intermediate role is filled by Cys142. Substrate-binding residues include Lys163 and Ser192. His235 (proton acceptor) is an active-site residue. Residue Glu237 is part of the active site. Arg249 provides a ligand contact to substrate.

The protein belongs to the MetA family.

Its subcellular location is the cytoplasm. It catalyses the reaction L-homoserine + acetyl-CoA = O-acetyl-L-homoserine + CoA. Its pathway is amino-acid biosynthesis; L-methionine biosynthesis via de novo pathway; O-acetyl-L-homoserine from L-homoserine: step 1/1. Transfers an acetyl group from acetyl-CoA to L-homoserine, forming acetyl-L-homoserine. The polypeptide is Homoserine O-acetyltransferase (Geobacillus kaustophilus (strain HTA426)).